The primary structure comprises 187 residues: Probable chemoreceptor glutamine deamidase CheD (187 aa).

A disordered region spans residues 164 to 187 (APQDVRRPTPPPMPAVASGDVDLF).

This sequence belongs to the CheD family.

The catalysed reaction is L-glutaminyl-[protein] + H2O = L-glutamyl-[protein] + NH4(+). Its function is as follows. Probably deamidates glutamine residues to glutamate on methyl-accepting chemotaxis receptors (MCPs), playing an important role in chemotaxis. This is Probable chemoreceptor glutamine deamidase CheD from Caulobacter vibrioides (strain ATCC 19089 / CIP 103742 / CB 15) (Caulobacter crescentus).